We begin with the raw amino-acid sequence, 364 residues long: Aminomethyltransferase (364 aa).

It belongs to the GcvT family. The glycine cleavage system is composed of four proteins: P, T, L and H.

The catalysed reaction is N(6)-[(R)-S(8)-aminomethyldihydrolipoyl]-L-lysyl-[protein] + (6S)-5,6,7,8-tetrahydrofolate = N(6)-[(R)-dihydrolipoyl]-L-lysyl-[protein] + (6R)-5,10-methylene-5,6,7,8-tetrahydrofolate + NH4(+). In terms of biological role, the glycine cleavage system catalyzes the degradation of glycine. The chain is Aminomethyltransferase from Staphylococcus carnosus (strain TM300).